We begin with the raw amino-acid sequence, 468 residues long: ATP synthase subunit beta (468 aa).

Position 155-162 (155-162 (GGAGVGKT)) interacts with ATP.

It belongs to the ATPase alpha/beta chains family. F-type ATPases have 2 components, CF(1) - the catalytic core - and CF(0) - the membrane proton channel. CF(1) has five subunits: alpha(3), beta(3), gamma(1), delta(1), epsilon(1). CF(0) has three main subunits: a(1), b(2) and c(9-12). The alpha and beta chains form an alternating ring which encloses part of the gamma chain. CF(1) is attached to CF(0) by a central stalk formed by the gamma and epsilon chains, while a peripheral stalk is formed by the delta and b chains.

It localises to the cell membrane. The enzyme catalyses ATP + H2O + 4 H(+)(in) = ADP + phosphate + 5 H(+)(out). Its function is as follows. Produces ATP from ADP in the presence of a proton gradient across the membrane. The catalytic sites are hosted primarily by the beta subunits. The protein is ATP synthase subunit beta of Bacillus cereus (strain ATCC 10987 / NRS 248).